Reading from the N-terminus, the 202-residue chain is Peptidyl-tRNA hydrolase (202 aa).

Tyr-14 contributes to the tRNA binding site. The active-site Proton acceptor is the His-19. TRNA contacts are provided by Phe-64, Asn-66, and Asn-112.

It belongs to the PTH family. In terms of assembly, monomer.

It is found in the cytoplasm. The enzyme catalyses an N-acyl-L-alpha-aminoacyl-tRNA + H2O = an N-acyl-L-amino acid + a tRNA + H(+). Functionally, hydrolyzes ribosome-free peptidyl-tRNAs (with 1 or more amino acids incorporated), which drop off the ribosome during protein synthesis, or as a result of ribosome stalling. Catalyzes the release of premature peptidyl moieties from peptidyl-tRNA molecules trapped in stalled 50S ribosomal subunits, and thus maintains levels of free tRNAs and 50S ribosomes. This is Peptidyl-tRNA hydrolase from Methylobacterium radiotolerans (strain ATCC 27329 / DSM 1819 / JCM 2831 / NBRC 15690 / NCIMB 10815 / 0-1).